The chain runs to 309 residues: Sulfate adenylyltransferase subunit 2 (309 aa).

The protein belongs to the PAPS reductase family. CysD subfamily. Heterodimer composed of CysD, the smaller subunit, and CysN.

The enzyme catalyses sulfate + ATP + H(+) = adenosine 5'-phosphosulfate + diphosphate. The protein operates within sulfur metabolism; hydrogen sulfide biosynthesis; sulfite from sulfate: step 1/3. With CysN forms the ATP sulfurylase (ATPS) that catalyzes the adenylation of sulfate producing adenosine 5'-phosphosulfate (APS) and diphosphate, the first enzymatic step in sulfur assimilation pathway. APS synthesis involves the formation of a high-energy phosphoric-sulfuric acid anhydride bond driven by GTP hydrolysis by CysN coupled to ATP hydrolysis by CysD. The sequence is that of Sulfate adenylyltransferase subunit 2 from Mycobacterium sp. (strain KMS).